We begin with the raw amino-acid sequence, 100 residues long: Urease subunit gamma (100 aa).

The protein belongs to the urease gamma subunit family. In terms of assembly, heterotrimer of UreA (gamma), UreB (beta) and UreC (alpha) subunits. Three heterotrimers associate to form the active enzyme.

The protein localises to the cytoplasm. The enzyme catalyses urea + 2 H2O + H(+) = hydrogencarbonate + 2 NH4(+). The protein operates within nitrogen metabolism; urea degradation; CO(2) and NH(3) from urea (urease route): step 1/1. In Escherichia coli O157:H7 (strain EC4115 / EHEC), this protein is Urease subunit gamma.